Reading from the N-terminus, the 90-residue chain is Putative cytochrome c oxidase subunit 5b-like (90 aa).

The Zn(2+) site is built by C43, C67, and C70.

This sequence belongs to the cytochrome c oxidase subunit 5B (TC 3.D.4.11) family.

The chain is Putative cytochrome c oxidase subunit 5b-like from Arabidopsis thaliana (Mouse-ear cress).